The sequence spans 255 residues: Imidazole glycerol phosphate synthase subunit HisF (255 aa).

Residues Asp-11 and Asp-130 contribute to the active site.

Belongs to the HisA/HisF family. As to quaternary structure, heterodimer of HisH and HisF.

Its subcellular location is the cytoplasm. It catalyses the reaction 5-[(5-phospho-1-deoxy-D-ribulos-1-ylimino)methylamino]-1-(5-phospho-beta-D-ribosyl)imidazole-4-carboxamide + L-glutamine = D-erythro-1-(imidazol-4-yl)glycerol 3-phosphate + 5-amino-1-(5-phospho-beta-D-ribosyl)imidazole-4-carboxamide + L-glutamate + H(+). The protein operates within amino-acid biosynthesis; L-histidine biosynthesis; L-histidine from 5-phospho-alpha-D-ribose 1-diphosphate: step 5/9. In terms of biological role, IGPS catalyzes the conversion of PRFAR and glutamine to IGP, AICAR and glutamate. The HisF subunit catalyzes the cyclization activity that produces IGP and AICAR from PRFAR using the ammonia provided by the HisH subunit. This chain is Imidazole glycerol phosphate synthase subunit HisF, found in Syntrophotalea carbinolica (strain DSM 2380 / NBRC 103641 / GraBd1) (Pelobacter carbinolicus).